Here is a 141-residue protein sequence, read N- to C-terminus: Nucleoside diphosphate kinase (141 aa).

ATP contacts are provided by K11, F59, R87, T93, R104, and N114. The Pros-phosphohistidine intermediate role is filled by H117.

This sequence belongs to the NDK family. Homotetramer. Mg(2+) serves as cofactor.

It is found in the cytoplasm. The catalysed reaction is a 2'-deoxyribonucleoside 5'-diphosphate + ATP = a 2'-deoxyribonucleoside 5'-triphosphate + ADP. It carries out the reaction a ribonucleoside 5'-diphosphate + ATP = a ribonucleoside 5'-triphosphate + ADP. In terms of biological role, major role in the synthesis of nucleoside triphosphates other than ATP. The ATP gamma phosphate is transferred to the NDP beta phosphate via a ping-pong mechanism, using a phosphorylated active-site intermediate. This Ralstonia nicotianae (strain ATCC BAA-1114 / GMI1000) (Ralstonia solanacearum) protein is Nucleoside diphosphate kinase.